The following is a 682-amino-acid chain: Methionine--tRNA ligase (682 aa).

The 'HIGH' region signature appears at 14-24; the sequence is PYANGSIHLGH. Zn(2+) is bound by residues C145, C148, C158, and C161. The 'KMSKS' region signature appears at 331–335; sequence KMSKS. Residue K334 coordinates ATP. The tRNA-binding domain occupies 580–682; sequence AFAAIDLRVA…SGARPGQRIK (103 aa).

The protein belongs to the class-I aminoacyl-tRNA synthetase family. MetG type 1 subfamily. In terms of assembly, homodimer. The cofactor is Zn(2+).

It localises to the cytoplasm. The catalysed reaction is tRNA(Met) + L-methionine + ATP = L-methionyl-tRNA(Met) + AMP + diphosphate. Is required not only for elongation of protein synthesis but also for the initiation of all mRNA translation through initiator tRNA(fMet) aminoacylation. The chain is Methionine--tRNA ligase from Pseudomonas syringae pv. syringae (strain B728a).